Here is a 697-residue protein sequence, read N- to C-terminus: MTDLSLYRNIGIFAHVDAGKTTTTERILKLTGKIHKLGEVHEGESTTDFMEQEAERGITIQSAAVTCEWKGHRLNVIDTPGHVDFTVEVYRSLKVLDGGIGVFCGSGGVEPQSETNWRYANDSEVARVIFVNKLDRVGADFLRVVEQVKKVLGANPLVMTLPIGREDTFTGVVDVLTKKAYIWDDSGLPENYEVTDVPADMVDEVDMYHEQLVETAVEQDDDLMMAYMEGEVPTVEQLKKCIRKGTRDLTFFPTFCGSAFKNKGVQLVLDAVVDYLPSPTEVDPQPLTDEEGNETGEHALVSADEPLRALAFKIMDDRFGALTFIRIYSGRMEKGMTVLNSFTGKTERIGRMVEMQANDRNEITSAQAGDILAVVGMKNVQTGHTLCDPKHPCTLEAMVFPEPVISIAVAPKDKTGSEKMGVAIGKMVAEDPSFRVETDEDSGETILKGMGELHLDIKVDILKRTYGVELNVGKPQVAYRETITQAIEDSYTHKKQSGGSGQFGKIDYRIRPGEPGTGFKFSSVVVGGNVPKEFFPAIEKGFSTMMAEGPLAGYPVLDVEIELYDGSYHAVDSSAVAFEIAAKGAFRQSMPKAGPQIIEPIMKVDVFTPEDHVGDVIGDLNRRRGMIKDQEPGVTGVRIKADVPLSEMFGYIGHLRTMTSGRGQFSMEFSHYLPCPNAVAEEVIAEAKKRKEEKAKK.

One can recognise a tr-type G domain in the interval serine 5 to threonine 280. Residues alanine 14–threonine 21, aspartate 78–histidine 82, and asparagine 132–aspartate 135 each bind GTP.

This sequence belongs to the TRAFAC class translation factor GTPase superfamily. Classic translation factor GTPase family. EF-G/EF-2 subfamily.

It is found in the cytoplasm. Its function is as follows. Catalyzes the GTP-dependent ribosomal translocation step during translation elongation. During this step, the ribosome changes from the pre-translocational (PRE) to the post-translocational (POST) state as the newly formed A-site-bound peptidyl-tRNA and P-site-bound deacylated tRNA move to the P and E sites, respectively. Catalyzes the coordinated movement of the two tRNA molecules, the mRNA and conformational changes in the ribosome. This chain is Elongation factor G 2, found in Saccharophagus degradans (strain 2-40 / ATCC 43961 / DSM 17024).